Here is an 83-residue protein sequence, read N- to C-terminus: Sec-independent protein translocase protein TatA (83 aa).

Residues 1 to 21 (MGGLSLPHLIVLALVVLILFG) form a helical membrane-spanning segment. The disordered stretch occupies residues 34-83 (KGIKSFKQGMNDEDSKPVTPPPAQIPPASLQQTPPPAQPAPQPTSTDQAQ). Pro residues predominate over residues 66–75 (TPPPAQPAPQ).

This sequence belongs to the TatA/E family. The Tat system comprises two distinct complexes: a TatABC complex, containing multiple copies of TatA, TatB and TatC subunits, and a separate TatA complex, containing only TatA subunits. Substrates initially bind to the TatABC complex, which probably triggers association of the separate TatA complex to form the active translocon.

The protein resides in the cell inner membrane. In terms of biological role, part of the twin-arginine translocation (Tat) system that transports large folded proteins containing a characteristic twin-arginine motif in their signal peptide across membranes. TatA could form the protein-conducting channel of the Tat system. This is Sec-independent protein translocase protein TatA from Novosphingobium aromaticivorans (strain ATCC 700278 / DSM 12444 / CCUG 56034 / CIP 105152 / NBRC 16084 / F199).